Reading from the N-terminus, the 113-residue chain is Large ribosomal subunit protein uL22 (113 aa).

It belongs to the universal ribosomal protein uL22 family. As to quaternary structure, part of the 50S ribosomal subunit.

Its function is as follows. This protein binds specifically to 23S rRNA; its binding is stimulated by other ribosomal proteins, e.g. L4, L17, and L20. It is important during the early stages of 50S assembly. It makes multiple contacts with different domains of the 23S rRNA in the assembled 50S subunit and ribosome. The globular domain of the protein is located near the polypeptide exit tunnel on the outside of the subunit, while an extended beta-hairpin is found that lines the wall of the exit tunnel in the center of the 70S ribosome. The chain is Large ribosomal subunit protein uL22 from Solibacter usitatus (strain Ellin6076).